The following is a 110-amino-acid chain: Cell division protein FtsB (110 aa).

Residues 1 to 3 (MRL) lie on the Cytoplasmic side of the membrane. Residues 4–21 (IILCLAALVLLIQFPLWL) form a helical membrane-spanning segment. Residues 22–110 (GKGGWLRVWD…PPKIEPKEKR (89 aa)) are Periplasmic-facing. Residues 31 to 64 (DLDQQVIAAQKKNDELRARNAKLNSEVQDLKEGT) adopt a coiled-coil conformation.

It belongs to the FtsB family. In terms of assembly, part of a complex composed of FtsB, FtsL and FtsQ.

Its subcellular location is the cell inner membrane. Functionally, essential cell division protein. May link together the upstream cell division proteins, which are predominantly cytoplasmic, with the downstream cell division proteins, which are predominantly periplasmic. This chain is Cell division protein FtsB, found in Herminiimonas arsenicoxydans.